Reading from the N-terminus, the 255-residue chain is Large ribosomal subunit protein uL4 (255 aa).

It belongs to the universal ribosomal protein uL4 family. As to quaternary structure, part of the 50S ribosomal subunit.

Functionally, one of the primary rRNA binding proteins, this protein initially binds near the 5'-end of the 23S rRNA. It is important during the early stages of 50S assembly. It makes multiple contacts with different domains of the 23S rRNA in the assembled 50S subunit and ribosome. In terms of biological role, forms part of the polypeptide exit tunnel. The chain is Large ribosomal subunit protein uL4 from Thermococcus onnurineus (strain NA1).